The following is a 697-amino-acid chain: MNKFSREAGEVVLLRAITKYSSQQGTLFFTSLRLVWVQSGYSEPSLHLHISEIKNQFISTPKSAKALLRLSVRDSIKNALQEFVFEFTHPTNARSDLNSFRDKIAATANLTAPTLPVSASNGSNTTSPTNGTSPINGTSPTMTGLKVNPDGTITNDPLSSQPAQVEEKAETKYLSKLKQPSLSEQQIKQRVILLQSNKELRELYEQMVNKDRVISESDFWESRKSMLKNDSTRSEKQHTGMPSNLLADVRPSSETPNAVHYRFTPTVIHQIFIQHPSVEKAYKANVPLKISEQNFWKKYVQSKYFYRDRSSANAPPVDDDLFSKYETDEQNKIRILKRKLIDINPLVDLSSTDGFDTDVHSGYGVLLDQSQDPNKLEKALPLLRKFNRHSALVLGSKDLLTNNSINIEKDQKNLKKTKKDENSTSTPTTTTTTTNTTNTTNTTTTTTTNNTTIKDPNLYNGDDEENISVEQMEKILENHKKLVNQHIIIDDLQEENSQTLTLLKISDQKRYFEGHSTNNILSDKEKSQLIDILDFDYKNWQPNLPQVFYQTHSSSSILQEPNISVHSEIFEPYNKAAINSKEEYNLPESSFKRDLFQSFHHCNELLRHFWATTFTLGRGAPPTSQQIDKNNKISSAIALQYDKIEEKKKMLISQNKVNQSSLFTPILESLHKAIEKKESQTNQYTFKNNNNNFHTIS.

The span at 115–136 shows a compositional bias: low complexity; it reads LPVSASNGSNTTSPTNGTSPIN. 2 disordered regions span residues 115–141 and 228–250; these read LPVS…TSPT and KNDS…ADVR. BSD domains follow at residues 174 to 231 and 255 to 307; these read LSKL…KNDS and TPNA…YFYR. Residues 412-422 show a composition bias toward basic and acidic residues; it reads KNLKKTKKDEN. Residues 412–462 are disordered; sequence KNLKKTKKDENSTSTPTTTTTTTNTTNTTNTTTTTTTNNTTIKDPNLYNGD. The segment covering 423 to 452 has biased composition (low complexity); that stretch reads STSTPTTTTTTTNTTNTTNTTTTTTTNNTT.

This sequence belongs to the TFB1 family. In terms of assembly, component of the 7-subunit TFIIH core complex composed of XPB/repB, XPD/repD, gtf2h1, gtf2h2, gtf2h3, gtf2h4 and gtf2h5, which is active in NER. The core complex associates with the 3-subunit CDK-activating kinase (CAK) module composed of cycH/cyclin H, cdk7 and mnat1 to form the 10-subunit holoenzyme (holo-TFIIH) active in transcription.

It is found in the nucleus. Functionally, component of the general transcription and DNA repair factor IIH (TFIIH) core complex, which is involved in general and transcription-coupled nucleotide excision repair (NER) of damaged DNA and, when complexed to CAK, in RNA transcription by RNA polymerase II. In NER, TFIIH acts by opening DNA around the lesion to allow the excision of the damaged oligonucleotide and its replacement by a new DNA fragment. In transcription, TFIIH has an essential role in transcription initiation. When the pre-initiation complex (PIC) has been established, TFIIH is required for promoter opening and promoter escape. Phosphorylation of the C-terminal tail (CTD) of the largest subunit of RNA polymerase II by the kinase module CAK controls the initiation of transcription. The polypeptide is General transcription factor IIH subunit 1 (gtf2h1) (Dictyostelium discoideum (Social amoeba)).